We begin with the raw amino-acid sequence, 114 residues long: MDLIKAVESQQMRKDLTPFNVGDTIRVHYKVIEGDRERIQPFEGIVIKKSGSGLRETFTVRRVSYGVGVERTFPLHSPRIEKIEVIRRGKVRRAKLYYLRKRVGKAATKIKELM.

This sequence belongs to the bacterial ribosomal protein bL19 family.

This protein is located at the 30S-50S ribosomal subunit interface and may play a role in the structure and function of the aminoacyl-tRNA binding site. This Thermoanaerobacter sp. (strain X514) protein is Large ribosomal subunit protein bL19.